The chain runs to 311 residues: Triacylglycerol lipase (311 aa).

A signal peptide spans 1-26 (MKKKSLLPLGLAIGLASLAASPLIQA). Residues 35–280 (PIVLAHGMLG…DNYRMNHLDE (246 aa)) enclose the AB hydrolase-1 domain. M42 lines the substrate pocket. Catalysis depends on S108, which acts as the Nucleophile. A substrate-binding site is contributed by H109. An intrachain disulfide couples C209 to C261. Ca(2+) is bound at residue D235. Residues D255 and H277 each act as charge relay system in the active site. Positions 279, 283, and 287 each coordinate Ca(2+).

Belongs to the AB hydrolase superfamily. Pseudomonas lipase family. In terms of assembly, monomer. It depends on Ca(2+) as a cofactor.

The protein localises to the secreted. It carries out the reaction a triacylglycerol + H2O = a diacylglycerol + a fatty acid + H(+). Its activity is regulated as follows. Na(+) increases lipase activity. Inhibited by diethyl p-nitrophenyl phosphate and 3,4-dichloroisocoumarin (DCI). Catalyzes the hydrolysis of triacylglycerol. It also exhibits some esterase activity with p-nitrophenyl acetate and Tween 80 as substrates, however the lipase activity is approximately eight times the esterase activity. It shows a marked specificity for the 1,3-oleyl residues of triolein. In Pseudomonas aeruginosa (strain ATCC 15692 / DSM 22644 / CIP 104116 / JCM 14847 / LMG 12228 / 1C / PRS 101 / PAO1), this protein is Triacylglycerol lipase.